The following is a 420-amino-acid chain: Putative polyketide beta-ketoacyl synthase 1 (420 aa).

Residues 3–414 (QRRVAITGIE…GFQSAMVLTS (412 aa)) enclose the Ketosynthase family 3 (KS3) domain. Residues Cys169, His307, and His344 each act as for beta-ketoacyl synthase activity in the active site.

It belongs to the thiolase-like superfamily. Beta-ketoacyl-ACP synthases family.

The protein operates within antifungal biosynthesis; monensin biosynthesis. This is Putative polyketide beta-ketoacyl synthase 1 from Streptomyces virginiae (Streptomyces cinnamonensis).